Here is a 930-residue protein sequence, read N- to C-terminus: Isoleucine--tRNA ligase (930 aa).

A 'HIGH' region motif is present at residues proline 57–histidine 67. Residue glutamate 554 coordinates L-isoleucyl-5'-AMP. The 'KMSKS' region motif lies at lysine 595–serine 599. Lysine 598 serves as a coordination point for ATP. The Zn(2+) site is built by cysteine 888, cysteine 891, cysteine 908, and cysteine 911.

Belongs to the class-I aminoacyl-tRNA synthetase family. IleS type 1 subfamily. Monomer. Zn(2+) serves as cofactor.

It is found in the cytoplasm. It carries out the reaction tRNA(Ile) + L-isoleucine + ATP = L-isoleucyl-tRNA(Ile) + AMP + diphosphate. Its function is as follows. Catalyzes the attachment of isoleucine to tRNA(Ile). As IleRS can inadvertently accommodate and process structurally similar amino acids such as valine, to avoid such errors it has two additional distinct tRNA(Ile)-dependent editing activities. One activity is designated as 'pretransfer' editing and involves the hydrolysis of activated Val-AMP. The other activity is designated 'posttransfer' editing and involves deacylation of mischarged Val-tRNA(Ile). The sequence is that of Isoleucine--tRNA ligase from Streptococcus sanguinis (strain SK36).